The chain runs to 1292 residues: ABC multidrug transporter MDR5 (1292 aa).

The interval Met1–Val43 is disordered. A run of 2 helical transmembrane segments spans residues Ile79–Phe99 and Leu128–Phe148. The region spanning Gly81–Lys370 is the ABC transmembrane type-1 1 domain. Asn149 carries an N-linked (GlcNAc...) asparagine glycan. 4 helical membrane passes run Val202–Gln222, Leu226–Ala246, Glu314–Leu334, and Ile344–Thr364. Residues Leu405–Ala650 form the ABC transporter 1 domain. Gly440–Ser447 contributes to the ATP binding site. A glycan (N-linked (GlcNAc...) asparagine) is linked at Asn494. The segment at Ala656 to His691 is disordered. The span at Asp663 to Ala680 shows a compositional bias: basic and acidic residues. 2 helical membrane passes run His720–Ala740 and Leu768–Leu788. Residues Leu725–Lys1012 enclose the ABC transmembrane type-1 2 domain. Asn820 carries an N-linked (GlcNAc...) asparagine glycan. The next 4 membrane-spanning stretches (helical) occupy residues Ile844–Thr864, Trp866–Ile886, Ile949–Phe969, and Phe986–Phe1006. Asn1009, Asn1031, and Asn1052 each carry an N-linked (GlcNAc...) asparagine glycan. In terms of domain architecture, ABC transporter 2 spans Val1048–Ala1285. Gly1083–Thr1090 contributes to the ATP binding site.

It belongs to the ABC transporter superfamily. ABCB family. Multidrug resistance exporter (TC 3.A.1.201) subfamily.

It is found in the cell membrane. The catalysed reaction is itraconazole(in) + ATP + H2O = itraconazole(out) + ADP + phosphate + H(+). In terms of biological role, pleiotropic ABC efflux transporter involved in the modulation susceptibility to itraconazole. The chain is ABC multidrug transporter MDR5 from Trichophyton rubrum (strain ATCC MYA-4607 / CBS 118892) (Athlete's foot fungus).